The primary structure comprises 324 residues: Acetyl-coenzyme A carboxylase carboxyl transferase subunit alpha (324 aa).

Positions 44-298 (RFQNQLVKLQ…KKELTEQLDS (255 aa)) constitute a CoA carboxyltransferase C-terminal domain.

It belongs to the AccA family. As to quaternary structure, acetyl-CoA carboxylase is a heterohexamer composed of biotin carboxyl carrier protein (accB), biotin carboxylase (accC) and two subunits each of ACCase subunit alpha (accA) and ACCase subunit beta (accD).

The protein localises to the plastid. It is found in the chloroplast. It catalyses the reaction N(6)-carboxybiotinyl-L-lysyl-[protein] + acetyl-CoA = N(6)-biotinyl-L-lysyl-[protein] + malonyl-CoA. It functions in the pathway lipid metabolism; malonyl-CoA biosynthesis; malonyl-CoA from acetyl-CoA: step 1/1. In terms of biological role, component of the acetyl coenzyme A carboxylase (ACC) complex. First, biotin carboxylase catalyzes the carboxylation of biotin on its carrier protein (BCCP) and then the CO(2) group is transferred by the carboxyltransferase to acetyl-CoA to form malonyl-CoA. The sequence is that of Acetyl-coenzyme A carboxylase carboxyl transferase subunit alpha from Pyropia yezoensis (Susabi-nori).